The sequence spans 622 residues: UvrABC system protein C (622 aa).

Residues 13 to 92 (DKPGVYLMKN…IKENRPKYNV (80 aa)) enclose the GIY-YIG domain. Residues 205–240 (DELIKKIEEKMKRAAEKMDFEGAAHYRDQRQALLDI) form the UVR domain.

Belongs to the UvrC family. Interacts with UvrB in an incision complex.

It is found in the cytoplasm. The UvrABC repair system catalyzes the recognition and processing of DNA lesions. UvrC both incises the 5' and 3' sides of the lesion. The N-terminal half is responsible for the 3' incision and the C-terminal half is responsible for the 5' incision. The polypeptide is UvrABC system protein C (Alkaliphilus metalliredigens (strain QYMF)).